A 709-amino-acid chain; its full sequence is Catalase HPII (709 aa).

Polar residues predominate over residues 1–26 (MSEQNNEQRSQAAGTDTVDRGNSNAK). The interval 1–32 (MSEQNNEQRSQAAGTDTVDRGNSNAKLEQLEA) is disordered. Active-site residues include His-90 and Asn-163. Residue Tyr-377 coordinates heme. The disordered stretch occupies residues 419 to 443 (RASYEPNSIDGGWPKETPPAARNGG).

The protein belongs to the catalase family. HPII subfamily. Requires heme as cofactor.

The protein resides in the cytoplasm. The enzyme catalyses 2 H2O2 = O2 + 2 H2O. Functionally, decomposes hydrogen peroxide into water and oxygen; serves to protect cells from the toxic effects of hydrogen peroxide. The protein is Catalase HPII (katE) of Pseudomonas aeruginosa (strain ATCC 15692 / DSM 22644 / CIP 104116 / JCM 14847 / LMG 12228 / 1C / PRS 101 / PAO1).